A 441-amino-acid chain; its full sequence is Glutamate--tRNA ligase 2 (441 aa).

The 'HIGH' region motif lies at 6-16 (PSPTGDMHIGN). Positions 231–235 (KMSKR) match the 'KMSKS' region motif. Residue Lys234 coordinates ATP.

It belongs to the class-I aminoacyl-tRNA synthetase family. Glutamate--tRNA ligase type 1 subfamily. In terms of assembly, monomer.

The protein localises to the cytoplasm. The catalysed reaction is tRNA(Glu) + L-glutamate + ATP = L-glutamyl-tRNA(Glu) + AMP + diphosphate. Catalyzes the attachment of glutamate to tRNA(Glu) in a two-step reaction: glutamate is first activated by ATP to form Glu-AMP and then transferred to the acceptor end of tRNA(Glu). This is Glutamate--tRNA ligase 2 from Helicobacter hepaticus (strain ATCC 51449 / 3B1).